Consider the following 507-residue polypeptide: Type II methyltransferase M.PstI (507 aa).

This sequence belongs to the N(4)/N(6)-methyltransferase family. In terms of assembly, monomer.

It catalyses the reaction a 2'-deoxyadenosine in DNA + S-adenosyl-L-methionine = an N(6)-methyl-2'-deoxyadenosine in DNA + S-adenosyl-L-homocysteine + H(+). Functionally, a gamma subtype methylase that recognizes the double-stranded sequence 5'-CTGCAG-3', methylates A-5 on both strands, and protects the DNA from cleavage by the PstI endonuclease. The chain is Type II methyltransferase M.PstI (pstIM) from Providencia stuartii.